A 354-amino-acid polypeptide reads, in one-letter code: Thiamine thiazole synthase (354 aa).

Residues Ala83, 104–105 (EA), Gly112, and Val177 each bind substrate. Residue Cys210 is modified to 2,3-didehydroalanine (Cys). Substrate contacts are provided by residues Asp212, His227, Met305, and 315–317 (RMR).

Belongs to the THI4 family. Homooctamer. The cofactor is Fe cation. In terms of processing, during the catalytic reaction, a sulfide is transferred from Cys-210 to a reaction intermediate, generating a dehydroalanine residue.

The protein resides in the cytoplasm. The protein localises to the nucleus. The catalysed reaction is [ADP-thiazole synthase]-L-cysteine + glycine + NAD(+) = [ADP-thiazole synthase]-dehydroalanine + ADP-5-ethyl-4-methylthiazole-2-carboxylate + nicotinamide + 3 H2O + 2 H(+). In terms of biological role, involved in biosynthesis of the thiamine precursor thiazole. Catalyzes the conversion of NAD and glycine to adenosine diphosphate 5-(2-hydroxyethyl)-4-methylthiazole-2-carboxylic acid (ADT), an adenylated thiazole intermediate. The reaction includes an iron-dependent sulfide transfer from a conserved cysteine residue of the protein to a thiazole intermediate. The enzyme can only undergo a single turnover, which suggests it is a suicide enzyme. May have additional roles in adaptation to various stress conditions and in DNA damage tolerance. This chain is Thiamine thiazole synthase, found in Candida albicans (strain WO-1) (Yeast).